A 334-amino-acid polypeptide reads, in one-letter code: Glycerol-1-phosphate dehydrogenase [NAD(P)+] (334 aa).

NAD(+) contacts are provided by residues 77–81 (GRPID) and 99–102 (TTAS). Asp-104 contributes to the substrate binding site. Ser-108 provides a ligand contact to NAD(+). A substrate-binding site is contributed by Asp-147. Zn(2+) contacts are provided by Asp-147 and His-225. Residue His-229 coordinates substrate. A Zn(2+)-binding site is contributed by His-246.

Belongs to the glycerol-1-phosphate dehydrogenase family. Requires Zn(2+) as cofactor.

The protein resides in the cytoplasm. It catalyses the reaction sn-glycerol 1-phosphate + NAD(+) = dihydroxyacetone phosphate + NADH + H(+). The enzyme catalyses sn-glycerol 1-phosphate + NADP(+) = dihydroxyacetone phosphate + NADPH + H(+). Its pathway is membrane lipid metabolism; glycerophospholipid metabolism. Catalyzes the NAD(P)H-dependent reduction of dihydroxyacetonephosphate (DHAP or glycerone phosphate) to glycerol 1-phosphate (G1P). The G1P thus generated is used as the glycerophosphate backbone of phospholipids in the cellular membranes of Archaea. The protein is Glycerol-1-phosphate dehydrogenase [NAD(P)+] of Methanococcus maripaludis (strain C6 / ATCC BAA-1332).